Here is a 637-residue protein sequence, read N- to C-terminus: MNANPKFLAATAEVDAAAVAPLPKSRKVYETGSRPDIRVPFREIEQADTPTMFGGEKNPPLTVYDTSGPYTDPQASIDIRRGLPALRRAWIEERGDTEVLDGPTSDYGKERLTDPKLTAMRFDLQRPPRRARAGANVTQMHYARRGIVTPEMEFIALRENLRREHYLETLRASGPDGEKLAKRLLRQHPGQSFGAALPSAITPEFVREEVARGRAIIPANINHPEIEPMIIGRNFLVKINANIGNSAVSSGIGEEVEKMTWAIRWGGDTVMDLSTGKHIHETREWIIRNSPVPIGTVPIYQALEKVDGKAEELTWEIFRDTLIEQAEQGVDYFTIHAGVRLPFIPMTADRMTGIVSRGGSIMAKWCLAHHKESFLYERFEEICEIMKAYDVSFSLGDGLRPGSGYDANDEAQFAELKTLGELTQVAWKHDVQVMIEGPGHVPMQMIKENMELQLKHCDEAPFYTLGPLTTDIAPGYDHITSGIGAALIGWYGTAMLCYVTPKEHLGLPNKKDVKDGIITYKIAAHAADLAKGHPGAAIRDNALSKARFEFRWDDQFNLGLDPDTAKEFHDETLPKDSMKVAHFCSMCGPHFCSMKITQDVRDYAAAQGVSEKDALQQGMQEKAVEFVKKGAEVYHRT.

Substrate contacts are provided by residues Asn-242, Met-271, Tyr-300, His-336, 356–358 (SRG), 397–400 (DGLR), and Glu-436. His-440 serves as a coordination point for Zn(2+). Residue Tyr-463 participates in substrate binding. His-504 is a Zn(2+) binding site. 3 residues coordinate [4Fe-4S] cluster: Cys-584, Cys-587, and Cys-592.

It belongs to the ThiC family. In terms of assembly, homodimer. [4Fe-4S] cluster is required as a cofactor.

It catalyses the reaction 5-amino-1-(5-phospho-beta-D-ribosyl)imidazole + S-adenosyl-L-methionine = 4-amino-2-methyl-5-(phosphooxymethyl)pyrimidine + CO + 5'-deoxyadenosine + formate + L-methionine + 3 H(+). It functions in the pathway cofactor biosynthesis; thiamine diphosphate biosynthesis. Catalyzes the synthesis of the hydroxymethylpyrimidine phosphate (HMP-P) moiety of thiamine from aminoimidazole ribotide (AIR) in a radical S-adenosyl-L-methionine (SAM)-dependent reaction. This is Phosphomethylpyrimidine synthase from Bordetella bronchiseptica (strain ATCC BAA-588 / NCTC 13252 / RB50) (Alcaligenes bronchisepticus).